Here is a 393-residue protein sequence, read N- to C-terminus: NAD(P)H-quinone oxidoreductase subunit H, chloroplastic (393 aa).

Belongs to the complex I 49 kDa subunit family. In terms of assembly, NDH is composed of at least 16 different subunits, 5 of which are encoded in the nucleus.

It localises to the plastid. The protein resides in the chloroplast thylakoid membrane. The enzyme catalyses a plastoquinone + NADH + (n+1) H(+)(in) = a plastoquinol + NAD(+) + n H(+)(out). It catalyses the reaction a plastoquinone + NADPH + (n+1) H(+)(in) = a plastoquinol + NADP(+) + n H(+)(out). In terms of biological role, NDH shuttles electrons from NAD(P)H:plastoquinone, via FMN and iron-sulfur (Fe-S) centers, to quinones in the photosynthetic chain and possibly in a chloroplast respiratory chain. The immediate electron acceptor for the enzyme in this species is believed to be plastoquinone. Couples the redox reaction to proton translocation, and thus conserves the redox energy in a proton gradient. This chain is NAD(P)H-quinone oxidoreductase subunit H, chloroplastic, found in Spinacia oleracea (Spinach).